The following is a 299-amino-acid chain: Arginase (299 aa).

H99, D122, H124, and D126 together coordinate Mn(2+). Substrate-binding positions include 124-128 (HGDVN), 135-137 (SGN), and D178. The Mn(2+) site is built by D226 and D228. Substrate-binding residues include T240 and E271.

The protein belongs to the arginase family. Homohexamer. Mn(2+) is required as a cofactor.

It catalyses the reaction L-arginine + H2O = urea + L-ornithine. The protein operates within nitrogen metabolism; urea cycle; L-ornithine and urea from L-arginine: step 1/1. Functionally, controls arginine catabolism. The chain is Arginase (rocF) from Bacillus caldovelox.